A 296-amino-acid chain; its full sequence is Cadherin-4 (296 aa).

Cadherin domains are found at residues 1-101, 102-216, and 217-296; these read NVPE…RPEF, INQV…PPEF, and TTST…MLTI. At 1 to 296 the chain is on the extracellular side; that stretch reads NVPENSRGPF…ELNRAFMLTI (296 aa). N-linked (GlcNAc...) asparagine glycans are attached at residues asparagine 107 and asparagine 236.

The protein resides in the cell membrane. Functionally, cadherins are calcium-dependent cell adhesion proteins. They preferentially interact with themselves in a homophilic manner in connecting cells; cadherins may thus contribute to the sorting of heterogeneous cell types. May play an important role in retinal development. In Rattus norvegicus (Rat), this protein is Cadherin-4 (Cdh4).